Here is a 146-residue protein sequence, read N- to C-terminus: Large ribosomal subunit protein uL15 (146 aa).

The tract at residues 1 to 64 is disordered; that stretch reads MQLNTIKPAI…MPMHRRLPKR (64 aa). Residues 30 to 39 show a composition bias toward basic residues; sequence TATKGHKGQK.

Belongs to the universal ribosomal protein uL15 family. Part of the 50S ribosomal subunit.

Its function is as follows. Binds to the 23S rRNA. This is Large ribosomal subunit protein uL15 from Geobacter sp. (strain M21).